Consider the following 92-residue polypeptide: Envelope glycoprotein J (92 aa).

Positions 1-22 (MDRYAVRTWGIVGILGCAAVGA) are cleaved as a signal peptide. Residues 23–49 (APTGPASDTTNATARLPTHPPLIRSGG) are Extracellular-facing. Asn33 carries N-linked (GlcNAc...) asparagine; by host glycosylation. The chain crosses the membrane as a helical span at residues 50 to 70 (FAVPLIVGGLCLMILGMACLL). The Cytoplasmic portion of the chain corresponds to 71–92 (EVLRRLGRELARCCPHAGQFAP).

The protein belongs to the alphaherpesvirinae glycoprotein J family.

Its subcellular location is the host Golgi apparatus membrane. It is found in the host endoplasmic reticulum membrane. The protein resides in the host endosome membrane. Functions as an activator of viral protein expression and virus production. In turn, promotes cell-to-cell spread as well as syncytia formation. This chain is Envelope glycoprotein J (gJ), found in Homo sapiens (Human).